The chain runs to 213 residues: Dimethylamine corrinoid protein (213 aa).

The B12-binding N-terminal domain occupies M1–K90. Residues L91–A213 enclose the B12-binding domain. Residue H104 coordinates methylcob(III)alamin.

It belongs to the methylamine corrinoid protein family. Copurifies with MtbA.

It participates in one-carbon metabolism; methanogenesis from dimethylamine. Functionally, acts as a methyl group carrier between MtbB1 and MtbA. Binds 1 corrinoid cofactor per protein, is subsequently demethylated by MtbA. The polypeptide is Dimethylamine corrinoid protein (Methanosarcina barkeri).